The chain runs to 413 residues: Tryptophan synthase beta chain (413 aa).

The residue at position 106 (K106) is an N6-(pyridoxal phosphate)lysine.

Belongs to the TrpB family. In terms of assembly, tetramer of two alpha and two beta chains. Pyridoxal 5'-phosphate serves as cofactor.

The enzyme catalyses (1S,2R)-1-C-(indol-3-yl)glycerol 3-phosphate + L-serine = D-glyceraldehyde 3-phosphate + L-tryptophan + H2O. The protein operates within amino-acid biosynthesis; L-tryptophan biosynthesis; L-tryptophan from chorismate: step 5/5. Its function is as follows. The beta subunit is responsible for the synthesis of L-tryptophan from indole and L-serine. The protein is Tryptophan synthase beta chain of Methylobacterium radiotolerans (strain ATCC 27329 / DSM 1819 / JCM 2831 / NBRC 15690 / NCIMB 10815 / 0-1).